Here is an 870-residue protein sequence, read N- to C-terminus: DNA mismatch repair protein MutS (870 aa).

Glycine 620 to serine 627 lines the ATP pocket.

It belongs to the DNA mismatch repair MutS family.

Functionally, this protein is involved in the repair of mismatches in DNA. It is possible that it carries out the mismatch recognition step. This protein has a weak ATPase activity. This is DNA mismatch repair protein MutS from Syntrophotalea carbinolica (strain DSM 2380 / NBRC 103641 / GraBd1) (Pelobacter carbinolicus).